A 181-amino-acid chain; its full sequence is Alkyl hydroperoxide reductase AhpD (181 aa).

The active-site Proton donor is the Cys131. Cys131 and Cys134 are joined by a disulfide. Cys134 functions as the Cysteine sulfenic acid (-SOH) intermediate in the catalytic mechanism.

This sequence belongs to the AhpD family.

It catalyses the reaction N(6)-[(R)-dihydrolipoyl]-L-lysyl-[lipoyl-carrier protein] + a hydroperoxide = N(6)-[(R)-lipoyl]-L-lysyl-[lipoyl-carrier protein] + an alcohol + H2O. Its function is as follows. Antioxidant protein with alkyl hydroperoxidase activity. Required for the reduction of the AhpC active site cysteine residues and for the regeneration of the AhpC enzyme activity. The chain is Alkyl hydroperoxide reductase AhpD from Azorhizobium caulinodans (strain ATCC 43989 / DSM 5975 / JCM 20966 / LMG 6465 / NBRC 14845 / NCIMB 13405 / ORS 571).